We begin with the raw amino-acid sequence, 91 residues long: UPF0250 protein BB0170 (91 aa).

This sequence belongs to the UPF0250 family.

The protein is UPF0250 protein BB0170 of Bordetella bronchiseptica (strain ATCC BAA-588 / NCTC 13252 / RB50) (Alcaligenes bronchisepticus).